The primary structure comprises 64 residues: MPKQKSHSGASKRFRVTGSGKVLRQRANRRHYLEHKTSRLTRRLDGVVPLTKADNRRVKRLLAR.

The span at 1–15 (MPKQKSHSGASKRFR) shows a compositional bias: basic residues. The segment at 1-22 (MPKQKSHSGASKRFRVTGSGKV) is disordered.

Belongs to the bacterial ribosomal protein bL35 family.

The sequence is that of Large ribosomal subunit protein bL35 from Frankia casuarinae (strain DSM 45818 / CECT 9043 / HFP020203 / CcI3).